Consider the following 356-residue polypeptide: Guanine nucleotide-binding protein alpha-2 subunit (356 aa).

The disordered stretch occupies residues 1–25; that stretch reads MGLCQSEEEKVGSQKSRAIDKEIKQ. Gly2 carries N-myristoyl glycine lipidation. A lipid anchor (S-palmitoyl cysteine) is attached at Cys4. A compositionally biased stretch (basic and acidic residues) spans 7 to 25; sequence EEEKVGSQKSRAIDKEIKQ. Residues 14 to 338 form the G-alpha domain; sequence QKSRAIDKEI…TDTNQVQKIL (325 aa). The tract at residues 17-30 is G1 motif; that stretch reads RAIDKEIKQNQSND. The GTP site is built by Gln25, Gln27, Ser28, Asn29, Asp30, Val135, Glu160, Ala166, Val188, Glu254, Ser255, Cys257, and Phe310. Asn29 contacts Mg(2+). Positions 158–166 are G2 motif; the sequence is FFENLDRIA. Residue Ala166 coordinates Mg(2+). The G3 motif stretch occupies residues 181–190; it reads RTKTTGIVEV. The tract at residues 250–257 is G4 motif; it reads MRLFESIC. The segment at 308-313 is G5 motif; it reads QKFEAL.

Belongs to the G-alpha family. G(q) subfamily. As to quaternary structure, g proteins are composed of 3 units; alpha, beta and gamma. The alpha chain contains the guanine nucleotide binding site. Mg(2+) is required as a cofactor.

Functionally, guanine nucleotide-binding proteins (G proteins) are involved as modulators or transducers in various transmembrane signaling systems. Involved in behavioral responses to P.aeruginosa by controlling the expression of daf-7, a member of the TGF-beta family, in ASJ sensory neurons. This chain is Guanine nucleotide-binding protein alpha-2 subunit (gpa-2), found in Caenorhabditis briggsae.